An 869-amino-acid polypeptide reads, in one-letter code: AP-3 complex subunit delta (869 aa).

N-acetylserine is present on serine 2. HEAT repeat units lie at residues 33 to 70 (NFIS…LHGV), 107 to 142 (SVML…GTHD), 143 to 179 (LARD…KYHD), 180 to 216 (AVKV…KDPQ), 218 to 254 (CLPL…IEPR), 292 to 329 (AAVK…KHLW), and 330 to 366 (AVLE…EDNV). The tract at residues 738 to 869 (ISQDSFNPKR…EQVIIPDFLL (132 aa)) is disordered. A compositionally biased stretch (polar residues) spans 769 to 780 (ITPQAKTNIQTA). Positions 815–830 (QEKEESSRIENHQNSE) are enriched in basic and acidic residues. Positions 831–850 (KKKKKKKKKKGEGSSKHKSR) are enriched in basic residues.

The protein belongs to the adaptor complexes large subunit family. Adaptor protein complex 3 (AP-3) is a heterotetramer composed of two large adaptins (delta-type subunit and beta-type subunit), a medium adaptin (mu-type subunit) and a small adaptin (sigma-type subunit). Binds to EPSIN2.

The protein localises to the cytoplasm. Its subcellular location is the golgi apparatus membrane. In terms of biological role, part of the AP-3 complex, an adaptor-related complex which seems to be clathrin-associated. The complex is associated with the Golgi region as well as more peripheral structures. It facilitates the budding of vesicles from the Golgi membrane and may be directly involved in trafficking to the vacuole. It also function in maintaining the identity of lytic vacuoles and in regulating the transition between storage and lytic vacuoles. The protein is AP-3 complex subunit delta (DELTA-ADR) of Arabidopsis thaliana (Mouse-ear cress).